A 65-amino-acid chain; its full sequence is Large ribosomal subunit protein bL35 (65 aa).

A disordered region spans residues 1–26 (MPKIKTLRGAAKRFKKTASGGFKRKQ). The segment covering 10 to 26 (AAKRFKKTASGGFKRKQ) has biased composition (basic residues).

The protein belongs to the bacterial ribosomal protein bL35 family.

In Histophilus somni (strain 2336) (Haemophilus somnus), this protein is Large ribosomal subunit protein bL35.